Reading from the N-terminus, the 708-residue chain is Ion-translocating oxidoreductase complex subunit C (708 aa).

4Fe-4S ferredoxin-type domains follow at residues 369–397 (GEPQ…QQLY) and 407–436 (KATT…VQYF). The [4Fe-4S] cluster site is built by C377, C380, C383, C387, C416, C419, C422, and C426. The disordered stretch occupies residues 630–682 (AKARKLEQQQANAEPEEQIDPRKAAVEAAIARAKARKLEQQQANAEPEEQIDP).

The protein belongs to the 4Fe4S bacterial-type ferredoxin family. RnfC subfamily. The complex is composed of six subunits: RsxA, RsxB, RsxC, RsxD, RsxE and RsxG. The cofactor is [4Fe-4S] cluster.

The protein resides in the cell inner membrane. Functionally, part of a membrane-bound complex that couples electron transfer with translocation of ions across the membrane. Required to maintain the reduced state of SoxR. The polypeptide is Ion-translocating oxidoreductase complex subunit C (Escherichia coli O1:K1 / APEC).